Consider the following 354-residue polypeptide: Protein FAM181A (354 aa).

2 stretches are compositionally biased toward basic and acidic residues: residues 1-14 (MPLE…ERND) and 129-142 (YLKR…RRLL). Disordered stretches follow at residues 1–35 (MPLE…KQVS), 117–160 (LPRG…CKEK), and 172–193 (AKEQ…VPMR).

It belongs to the FAM181 family.

The sequence is that of Protein FAM181A (FAM181A) from Homo sapiens (Human).